Reading from the N-terminus, the 107-residue chain is Small ribosomal subunit protein uS17 (107 aa).

It belongs to the universal ribosomal protein uS17 family. In terms of assembly, part of the 30S ribosomal subunit.

Functionally, one of the primary rRNA binding proteins, it binds specifically to the 5'-end of 16S ribosomal RNA. In Nitrosopumilus maritimus (strain SCM1), this protein is Small ribosomal subunit protein uS17.